Consider the following 447-residue polypeptide: Phosphoglucosamine mutase (447 aa).

Residue S102 is the Phosphoserine intermediate of the active site. Mg(2+) is bound by residues S102, D241, D243, and D245. S102 carries the post-translational modification Phosphoserine.

Belongs to the phosphohexose mutase family. Requires Mg(2+) as cofactor. In terms of processing, activated by phosphorylation.

The catalysed reaction is alpha-D-glucosamine 1-phosphate = D-glucosamine 6-phosphate. Catalyzes the conversion of glucosamine-6-phosphate to glucosamine-1-phosphate. The sequence is that of Phosphoglucosamine mutase from Methylococcus capsulatus (strain ATCC 33009 / NCIMB 11132 / Bath).